Consider the following 392-residue polypeptide: uncharacterized protein (392 aa).

This is an uncharacterized protein from Encephalitozoon cuniculi (strain GB-M1) (Microsporidian parasite).